The following is a 155-amino-acid chain: Cytochrome c-type biogenesis protein CcmE (155 aa).

Residues 1-8 are Cytoplasmic-facing; that stretch reads MNPLRKKR. The helical; Signal-anchor for type II membrane protein transmembrane segment at 9–29 threads the bilayer; the sequence is LLIIVALLAGVGLAVTLALSA. Topologically, residues 30–155 are periplasmic; that stretch reads LQENINLFYT…AASPTPVKQG (126 aa). Residues H124 and Y128 each contribute to the heme site.

This sequence belongs to the CcmE/CycJ family.

Its subcellular location is the cell inner membrane. Heme chaperone required for the biogenesis of c-type cytochromes. Transiently binds heme delivered by CcmC and transfers the heme to apo-cytochromes in a process facilitated by CcmF and CcmH. The chain is Cytochrome c-type biogenesis protein CcmE from Pseudomonas syringae pv. syringae (strain B728a).